Here is a 184-residue protein sequence, read N- to C-terminus: MASTLPVQTLPLILILLAVLAPGTADFNISSLSGLLSPALTESLLIALPPCHLTGGNATLMVRRANDSKVVKSDFVVPPCRGRRELVSVVDSGSGYTVTRLSAYQVTNLTPGTKYYISYRVQKGTSTESSPETPMSTLPRKNMESIGLGMARTGGMVVITVLLSVAMFLLVVGLIVALHWDARK.

The first 25 residues, 1 to 25 (MASTLPVQTLPLILILLAVLAPGTA), serve as a signal peptide directing secretion. Residues 26-84 (DFNISSLSGLLSPALTESLLIALPPCHLTGGNATLMVRRANDSKVVKSDFVVPPCRGRR) constitute a propeptide that is removed on maturation. N-linked (GlcNAc...) asparagine glycosylation is found at asparagine 28, asparagine 57, and asparagine 66. The Lumenal portion of the chain corresponds to 85 to 155 (ELVSVVDSGS…IGLGMARTGG (71 aa)). A helical membrane pass occupies residues 156 to 180 (MVVITVLLSVAMFLLVVGLIVALHW). The Cytoplasmic segment spans residues 181–184 (DARK).

The protein belongs to the uroplakin-2 family. As to quaternary structure, interacts with uroplakin-1a (UPK1A).

The protein resides in the cell membrane. Its function is as follows. Component of the asymmetric unit membrane (AUM); a highly specialized biomembrane elaborated by terminally differentiated urothelial cells. May play an important role in regulating the assembly of the AUM. The polypeptide is Uroplakin-2 (Upk2) (Mus musculus (Mouse)).